The following is a 1166-amino-acid chain: UDP-N-acetylglucosamine transferase subunit ALG13 (1166 aa).

The segment at 1–125 is glycosyltransferase activity; that stretch reads MKRAFVTVGT…LHKEGHLFYC (125 aa). The interval 126–394 is deubiquitinase activity; the sequence is TCRVLSCPAP…GSRRNKHHAL (269 aa). One can recognise an OTU domain in the interval 225-346; the sequence is LFRKVVAKDA…NGHYDSVYSK (122 aa). D233 acts as the For deubiquitinase activity in catalysis. The active-site Nucleophile; for deubiquitinase activity is the C236. Residue H339 is the For deubiquitinase activity of the active site. A disordered region spans residues 393-438; the sequence is ALTASVEGSSDQKSSTEDRTEEAAACSSAASTPEGNKQGTERQKVP. One can recognise a Tudor domain in the interval 486 to 546; it reads YYFLGDKCQV…RPVNQVALLP (61 aa). Composition is skewed to pro residues over residues 921-930, 941-957, and 1004-1034; these read PPPLPPPPPA, PLPPPPPPPPPPPPPYS, and QPQPQPQPQPQPQPQPQPQPQQPQQQQPPPQ. Disordered stretches follow at residues 921 to 966 and 998 to 1056; these read PPPL…SDLP and QQQL…EQPL.

It belongs to the glycosyltransferase 28 family. Forms with ALG14 the active heterodimeric UDP-N-acetylglucosamine transferase complex. In terms of assembly, not able to interact with ALG14 to form an active UDP-N-acetylglucosamine transferase complex.

Its subcellular location is the endoplasmic reticulum membrane. The catalysed reaction is an N-acetyl-alpha-D-glucosaminyl-diphospho-di-trans,poly-cis-dolichol + UDP-N-acetyl-alpha-D-glucosamine = an N,N'-diacetylchitobiosyl-diphospho-di-trans,poly-cis-dolichol + UDP + H(+). Its pathway is protein modification; protein glycosylation. In terms of biological role, catalytic subunit of the UDP-N-acetylglucosamine transferase complex that operates in the biosynthetic pathway of dolichol-linked oligosaccharides, the glycan precursors employed in protein asparagine (N)-glycosylation. The assembly of dolichol-linked oligosaccharides begins on the cytosolic side of the endoplasmic reticulum membrane and finishes in its lumen. The sequential addition of sugars to dolichol pyrophosphate produces dolichol-linked oligosaccharides containing fourteen sugars, including two GlcNAcs, nine mannoses and three glucoses. Once assembled, the oligosaccharide is transferred from the lipid to nascent proteins by oligosaccharyltransferases. On the cytoplasmic face of the endoplasmic reticulum, the dimeric ALG13/ALG14 complex catalyzes the second step of dolichol pyrophosphate biosynthesis, transferring a beta1,4-linked N-acetylglucosamine (GlcNAc) from UDP-GlcNAc to GlcNAc-pyrophosphatedolichol (Gn-PDol) to produce N,N'-diacetylchitobiosyl diphosphodolichol. N,N'-diacetylchitobiosyl diphosphodolichol is a substrate for ALG1, the following enzyme in the biosynthetic pathway. No glycosyltransferase or deubiquitinase activity is detected for this potential multifunctional enzyme. This chain is UDP-N-acetylglucosamine transferase subunit ALG13, found in Mus musculus (Mouse).